Consider the following 452-residue polypeptide: Plasminogen-binding protein PgbA (452 aa).

The disordered stretch occupies residues 265 to 452 (QEAIKEPKKA…RRKALEAGKK (188 aa)). Basic and acidic residues-rich tracts occupy residues 284–310 (LEEK…DERK) and 317–373 (KAME…KEPS). The segment covering 374 to 391 (DGNNATQQGEKQNAPKEN) has biased composition (polar residues). Basic and acidic residues predominate over residues 392–452 (NAQKEENKPN…RRKALEAGKK (61 aa)).

It localises to the cell surface. Its function is as follows. Binds plasminogen, specifically, and in a concentration and lysine-dependent manner. Plasminogen is the precursor of plasmin, a serine protease that cleaves fibrin, fibronectin, laminin and vitronectin. Acquisition of plasminogen/plasmin could enable H.pylori to degrade host components. This is Plasminogen-binding protein PgbA (pgbA) from Helicobacter pylori (strain ATCC 700392 / 26695) (Campylobacter pylori).